A 354-amino-acid polypeptide reads, in one-letter code: 3-isopropylmalate dehydrogenase (354 aa).

Substrate is bound by residues Arg96, Arg106, Arg132, and Asp223. Mg(2+)-binding residues include Asp223, Asp247, and Asp251. Gly283 to Asp295 contacts NAD(+).

The protein belongs to the isocitrate and isopropylmalate dehydrogenases family. LeuB type 2 subfamily. As to quaternary structure, homodimer. Mg(2+) serves as cofactor. The cofactor is Mn(2+).

It localises to the cytoplasm. It catalyses the reaction (2R,3S)-3-isopropylmalate + NAD(+) = 4-methyl-2-oxopentanoate + CO2 + NADH. It functions in the pathway amino-acid biosynthesis; L-leucine biosynthesis; L-leucine from 3-methyl-2-oxobutanoate: step 3/4. Catalyzes the oxidation of 3-carboxy-2-hydroxy-4-methylpentanoate (3-isopropylmalate) to 3-carboxy-4-methyl-2-oxopentanoate. The product decarboxylates to 4-methyl-2 oxopentanoate. This chain is 3-isopropylmalate dehydrogenase, found in Thermobifida fusca (strain YX).